The chain runs to 38 residues: Photosystem II reaction center protein L (38 aa).

A helical membrane pass occupies residues 17 to 37 (SLFWGLLLIFVLAVLFSSYFF).

Belongs to the PsbL family. As to quaternary structure, PSII is composed of 1 copy each of membrane proteins PsbA, PsbB, PsbC, PsbD, PsbE, PsbF, PsbH, PsbI, PsbJ, PsbK, PsbL, PsbM, PsbT, PsbX, PsbY, PsbZ, Psb30/Ycf12, at least 3 peripheral proteins of the oxygen-evolving complex and a large number of cofactors. It forms dimeric complexes.

The protein resides in the plastid. Its subcellular location is the chloroplast thylakoid membrane. Functionally, one of the components of the core complex of photosystem II (PSII). PSII is a light-driven water:plastoquinone oxidoreductase that uses light energy to abstract electrons from H(2)O, generating O(2) and a proton gradient subsequently used for ATP formation. It consists of a core antenna complex that captures photons, and an electron transfer chain that converts photonic excitation into a charge separation. This subunit is found at the monomer-monomer interface and is required for correct PSII assembly and/or dimerization. This Rhodomonas salina (Cryptomonas salina) protein is Photosystem II reaction center protein L.